The following is a 343-amino-acid chain: Probable transposase for insertion sequence element (343 aa).

It belongs to the transposase mutator family.

Functionally, required for the transposition of the insertion element. In Corynebacterium diphtheriae, this protein is Probable transposase for insertion sequence element.